A 129-amino-acid chain; its full sequence is Intraflagellar transport protein 20 homolog (129 aa).

Positions Val89–Glu121 form a coiled coil.

In terms of assembly, component of the IFT complex B composed of at least che-2, che-13, dyf-1, dyf-3, dyf-6, dyf-11, dyf-13, ift-20, ift-74, ift-81, ifta-2, osm-1, osm-5 and osm-6.

Its subcellular location is the cell projection. The protein localises to the cilium. Functionally, component of the intraflagellar transport (IFT) complex B required for transport of proteins in the motile cilium. Required for ciliary entrance and transport of specific ciliary cargo proteins such as che-3 which are related to motility. This chain is Intraflagellar transport protein 20 homolog, found in Caenorhabditis elegans.